Here is a 430-residue protein sequence, read N- to C-terminus: MIOREX complex component 4 (430 aa).

The transit peptide at 1 to 27 (MTVLYTSASLKKMKCLAFNMGMNCVRT) directs the protein to the mitochondrion. A helical transmembrane segment spans residues 403–420 (FLISLSALLASFFAYYRY).

In terms of assembly, associates with the mitochondrial ribosome.

It is found in the mitochondrion. Its subcellular location is the mitochondrion membrane. Its function is as follows. Component of MIOREX complexes, large expressome-like assemblies of ribosomes with factors involved in all the steps of post-transcriptional gene expression. This Saccharomyces cerevisiae (strain ATCC 204508 / S288c) (Baker's yeast) protein is MIOREX complex component 4.